We begin with the raw amino-acid sequence, 234 residues long: Small ribosomal subunit protein eS4 (234 aa).

Positions valine 37 to glycine 99 constitute an S4 RNA-binding domain.

This sequence belongs to the eukaryotic ribosomal protein eS4 family.

This is Small ribosomal subunit protein eS4 (rps4e) from Haloarcula marismortui (strain ATCC 43049 / DSM 3752 / JCM 8966 / VKM B-1809) (Halobacterium marismortui).